The following is a 199-amino-acid chain: Peroxiredoxin-1 (199 aa).

The region spanning 6–165 (AYIGKLAPDF…TLRLVQAFQF (160 aa)) is the Thioredoxin domain. The active-site Cysteine sulfenic acid (-SOH) intermediate is cysteine 52.

Belongs to the peroxiredoxin family. AhpC/Prx1 subfamily. In terms of assembly, homodimer; disulfide-linked, upon oxidation. 5 homodimers assemble to form a ring-like decamer. Interacts with GDPD5; forms a mixed-disulfide with GDPD5. Interacts with SESN1 and SESN2. Interacts with FAM107A. The enzyme can be inactivated by further oxidation of the cysteine sulfenic acid (C(P)-SOH) to sulphinic acid (C(P)-SO2H) instead of its condensation to a disulfide bond. It can be reactivated by forming a transient disulfide bond with sulfiredoxin SRXN1, which reduces the cysteine sulfinic acid in an ATP- and Mg-dependent manner.

The protein localises to the cytoplasm. It carries out the reaction a hydroperoxide + [thioredoxin]-dithiol = an alcohol + [thioredoxin]-disulfide + H2O. Functionally, thiol-specific peroxidase that catalyzes the reduction of hydrogen peroxide and organic hydroperoxides to water and alcohols, respectively. Plays a role in cell protection against oxidative stress by detoxifying peroxides and as sensor of hydrogen peroxide-mediated signaling events. Might participate in the signaling cascades of growth factors and tumor necrosis factor-alpha by regulating the intracellular concentrations of H(2)O(2). Reduces an intramolecular disulfide bond in GDPD5 that gates the ability to GDPD5 to drive postmitotic motor neuron differentiation. This Gekko japonicus (Schlegel's Japanese gecko) protein is Peroxiredoxin-1 (PRDX1).